Here is a 271-residue protein sequence, read N- to C-terminus: MTESYALFVAFVLGIVEGLTEFLPVSSTGHMIIVGHLLGFEGPKAATFEVVIQMGSILAVVAVFWRRLFGLIGIHFGQKPPQDHATLSLVHIILGMLPAVIIGLGIHSWIKANLFGPETVMYALVAGGILLIIAEKFRPTVRSETLDDISYKQAFGIGLFQCLALWPGFSRSGATISGGMLMGISRQAAAEFSFILAVPMMVAASGLDLYKSRDLLSMADFPMFAVGFITAFVVAMIAIKTFLALIRRLDFIPFAIYRFIVAFAVYLVFVA.

8 consecutive transmembrane segments (helical) span residues 5–25, 45–65, 86–106, 114–134, 149–169, 189–209, 226–246, and 251–271; these read YALF…FLPV, AATF…AVFW, TLSL…GLGI, LFGP…LIIA, ISYK…WPGF, AAEF…GLDL, VGFI…LALI, and FIPF…VFVA.

This sequence belongs to the UppP family.

It is found in the cell inner membrane. It carries out the reaction di-trans,octa-cis-undecaprenyl diphosphate + H2O = di-trans,octa-cis-undecaprenyl phosphate + phosphate + H(+). Catalyzes the dephosphorylation of undecaprenyl diphosphate (UPP). Confers resistance to bacitracin. This is Undecaprenyl-diphosphatase from Aeromonas salmonicida (strain A449).